Consider the following 110-residue polypeptide: uncharacterized protein (110 aa).

Disordered stretches follow at residues 1–41 (MEWG…ERAQ) and 65–110 (LRQL…ASES). A coiled-coil region spans residues 38-68 (ERAQQLLDAVEQRQRQLLDTIAACEEMLRQL).

This is an uncharacterized protein from Mus musculus (Mouse).